The sequence spans 408 residues: Cytochrome bc1 complex Rieske iron-sulfur subunit (408 aa).

The next 3 helical transmembrane spans lie at 56–76 (VGIW…TYIF), 98–118 (MLGI…VLYV), and 166–186 (LLAG…GGMI). Residues 293-390 (HGPRNAVMLI…ITVDEEGYLI (98 aa)) form the Rieske domain. C333, H335, C352, and H355 together coordinate [2Fe-2S] cluster. A disulfide bond links C338 and C354.

It belongs to the Rieske iron-sulfur protein family. As to quaternary structure, the cytochrome bc1 complex is composed of a cytochrome b (QcrB), the Rieske iron-sulfur protein (QcrA) and a diheme cytochrome c (QcrC) subunit. The bc1 complex forms a supercomplex with cytochrome c oxidase (cytochrome aa3). The cofactor is [2Fe-2S] cluster.

The protein resides in the cell membrane. Functionally, iron-sulfur subunit of the cytochrome bc1 complex, an essential component of the respiratory electron transport chain required for ATP synthesis. The bc1 complex catalyzes the oxidation of menaquinol and the reduction of cytochrome c in the respiratory chain. The bc1 complex operates through a Q-cycle mechanism that couples electron transfer to generation of the proton gradient that drives ATP synthesis. This Corynebacterium efficiens (strain DSM 44549 / YS-314 / AJ 12310 / JCM 11189 / NBRC 100395) protein is Cytochrome bc1 complex Rieske iron-sulfur subunit (qcrA).